A 681-amino-acid polypeptide reads, in one-letter code: Endopolyphosphatase (681 aa).

The Cytoplasmic portion of the chain corresponds to 1-23 (MKELQLPEKRKSNTGLSWFPSPR). A helical; Signal-anchor for type II membrane protein transmembrane segment spans residues 24-44 (ILQVFLVLLGAIVAFLSFSAT). The Vacuolar portion of the chain corresponds to 45 to 681 (SSIISSSPKH…RAFCSSGYED (637 aa)). Residues N127, N173, N309, and N487 are each glycosylated (N-linked (GlcNAc...) asparagine). Basic residues predominate over residues 549 to 562 (KKKKKGKKGKKNKN). Residues 549–585 (KKKKKGKKGKKNKNSKNWWKTDKTFPKKKPKNLPPGP) are disordered.

Belongs to the endopolyphosphatase PPN1 family. It depends on a divalent metal cation as a cofactor. Processing by proteases in the vacuole may be required for activation.

It is found in the vacuole membrane. The catalysed reaction is [phosphate](n+1) + n H2O = (n+1) phosphate + n H(+). Functionally, catalyzes the hydrolysis of inorganic polyphosphate (polyP) chains of many hundreds of phosphate residues into shorter lengths. The protein is Endopolyphosphatase (PPN1) of Kluyveromyces lactis (strain ATCC 8585 / CBS 2359 / DSM 70799 / NBRC 1267 / NRRL Y-1140 / WM37) (Yeast).